Consider the following 202-residue polypeptide: Protein lin-28 homolog A (202 aa).

A disordered region spans residues 1-31 (MGSVSNQQFAGAKPGEEPSGDSPKAENESQP). The CSD domain occupies 33-106 (HGSGICKWFN…GLESIRVTGP (74 aa)). Positions 107-130 (GGVFCIGSERRPKSKSLQKRRSKG) are flexible linker. 2 consecutive CCHC-type zinc fingers follow at residues 131–148 (DRCY…ECKL) and 153–170 (KKCH…NCPA). The Zn(2+) site is built by Cys-133, Cys-136, His-141, Cys-146, Cys-155, Cys-158, His-163, and Cys-168. The segment at 169-202 (PAKAQQSPSSQGKPAYFREKEDMHSSALLPETRE) is disordered.

Belongs to the lin-28 family. In terms of assembly, monomer.

It localises to the cytoplasm. It is found in the rough endoplasmic reticulum. The protein resides in the P-body. The protein localises to the stress granule. Its subcellular location is the nucleus. It localises to the nucleolus. Its function is as follows. RNA-binding protein that inhibits processing of pre-let-7 miRNAs and regulates translation of mRNAs that control developmental timing, pluripotency and metabolism. Seems to recognize a common structural G-quartet (G4) feature in its miRNA and mRNA targets. 'Translational enhancer' that drives specific mRNAs to polysomes and increases the efficiency of protein synthesis. Its association with the translational machinery and target mRNAs results in an increased number of initiation events per molecule of mRNA and, indirectly, in mRNA stabilization. Suppressor of microRNA (miRNA) biogenesis, including that of let-7. Binds specific target miRNA precursors (pre-miRNAs), recognizing an 5'-GGAG-3' motif found in their terminal loop, and recruits uridylyltransferase. This results in the terminal uridylation of target pre-miRNAs. Uridylated pre-miRNAs fail to be processed by Dicer and undergo degradation. Localized to the periendoplasmic reticulum area, binds to a large number of spliced mRNAs and inhibits the translation of mRNAs destined for the ER, reducing the synthesis of transmembrane proteins, ER or Golgi lumen proteins, and secretory proteins. Binds to and enhances the translation of mRNAs for several metabolic enzymes, increasing glycolysis and oxidative phosphorylation. Which, with the let-7 repression may enhance tissue repair in adult tissue. The polypeptide is Protein lin-28 homolog A (LIN28A) (Gallus gallus (Chicken)).